The chain runs to 154 residues: Ribosomal RNA large subunit methyltransferase H (154 aa).

Positions 71 and 103 each coordinate S-adenosyl-L-methionine.

Belongs to the RNA methyltransferase RlmH family. Homodimer.

The protein localises to the cytoplasm. It carries out the reaction pseudouridine(1915) in 23S rRNA + S-adenosyl-L-methionine = N(3)-methylpseudouridine(1915) in 23S rRNA + S-adenosyl-L-homocysteine + H(+). In terms of biological role, specifically methylates the pseudouridine at position 1915 (m3Psi1915) in 23S rRNA. The sequence is that of Ribosomal RNA large subunit methyltransferase H from Solidesulfovibrio magneticus (strain ATCC 700980 / DSM 13731 / RS-1) (Desulfovibrio magneticus).